Here is a 101-residue protein sequence, read N- to C-terminus: Large ribosomal subunit protein uL24 (101 aa).

The protein belongs to the universal ribosomal protein uL24 family. In terms of assembly, part of the 50S ribosomal subunit.

One of two assembly initiator proteins, it binds directly to the 5'-end of the 23S rRNA, where it nucleates assembly of the 50S subunit. Functionally, one of the proteins that surrounds the polypeptide exit tunnel on the outside of the subunit. In Ligilactobacillus salivarius (strain UCC118) (Lactobacillus salivarius), this protein is Large ribosomal subunit protein uL24.